Consider the following 316-residue polypeptide: Acetyl-coenzyme A carboxylase carboxyl transferase subunit alpha (316 aa).

The CoA carboxyltransferase C-terminal domain occupies 39 to 293 (KLEEKNAQLT…KKHLQANLTN (255 aa)).

The protein belongs to the AccA family. In terms of assembly, acetyl-CoA carboxylase is a heterohexamer composed of biotin carboxyl carrier protein (AccB), biotin carboxylase (AccC) and two subunits each of ACCase subunit alpha (AccA) and ACCase subunit beta (AccD).

It is found in the cytoplasm. It catalyses the reaction N(6)-carboxybiotinyl-L-lysyl-[protein] + acetyl-CoA = N(6)-biotinyl-L-lysyl-[protein] + malonyl-CoA. It participates in lipid metabolism; malonyl-CoA biosynthesis; malonyl-CoA from acetyl-CoA: step 1/1. Its function is as follows. Component of the acetyl coenzyme A carboxylase (ACC) complex. First, biotin carboxylase catalyzes the carboxylation of biotin on its carrier protein (BCCP) and then the CO(2) group is transferred by the carboxyltransferase to acetyl-CoA to form malonyl-CoA. This Coxiella burnetii (strain RSA 331 / Henzerling II) protein is Acetyl-coenzyme A carboxylase carboxyl transferase subunit alpha.